A 134-amino-acid polypeptide reads, in one-letter code: MYRLDVVTPTGSVFSGDVYQTVITTADGEIGILENHMLLLTNITPGKLRIEKADGEVKEFAVTYGVLDVRGDKVIALVEEVFELDEINVDNEKQLLEEANQKLQNENLSEEEKEHYEKQRSRSQALLNLASAKV.

Positions 100–134 (NQKLQNENLSEEEKEHYEKQRSRSQALLNLASAKV) are disordered. Positions 110–120 (EEEKEHYEKQR) are enriched in basic and acidic residues.

This sequence belongs to the ATPase epsilon chain family. As to quaternary structure, F-type ATPases have 2 components, CF(1) - the catalytic core - and CF(0) - the membrane proton channel. CF(1) has five subunits: alpha(3), beta(3), gamma(1), delta(1), epsilon(1). CF(0) has three main subunits: a, b and c.

It localises to the cell inner membrane. Its function is as follows. Produces ATP from ADP in the presence of a proton gradient across the membrane. The polypeptide is ATP synthase epsilon chain (Sulfurihydrogenibium sp. (strain YO3AOP1)).